Here is a 422-residue protein sequence, read N- to C-terminus: Serine--tRNA ligase (422 aa).

229 to 231 (TAE) lines the L-serine pocket. ATP contacts are provided by residues 260 to 262 (RRE) and Val276. Glu283 contributes to the L-serine binding site. 349–352 (EVTS) contacts ATP. Thr384 contacts L-serine.

It belongs to the class-II aminoacyl-tRNA synthetase family. Type-1 seryl-tRNA synthetase subfamily. Homodimer. The tRNA molecule binds across the dimer.

Its subcellular location is the cytoplasm. The enzyme catalyses tRNA(Ser) + L-serine + ATP = L-seryl-tRNA(Ser) + AMP + diphosphate + H(+). The catalysed reaction is tRNA(Sec) + L-serine + ATP = L-seryl-tRNA(Sec) + AMP + diphosphate + H(+). The protein operates within aminoacyl-tRNA biosynthesis; selenocysteinyl-tRNA(Sec) biosynthesis; L-seryl-tRNA(Sec) from L-serine and tRNA(Sec): step 1/1. Its function is as follows. Catalyzes the attachment of serine to tRNA(Ser). Is also able to aminoacylate tRNA(Sec) with serine, to form the misacylated tRNA L-seryl-tRNA(Sec), which will be further converted into selenocysteinyl-tRNA(Sec). The sequence is that of Serine--tRNA ligase from Treponema denticola (strain ATCC 35405 / DSM 14222 / CIP 103919 / JCM 8153 / KCTC 15104).